The chain runs to 332 residues: MPAVKRKAAPTLGAKLQRRVRPRFEAEPDSDVEGSSDEAPSEEEGGGFHTGSDTEEEEEDEEIEEGSEPGSDDDSDAPSEHGGAGIDASQLSFGALARAQASLGALKKKKKKKGGDEDGSDDDEEKEEPNWKTEIEKGMKAKVEKHHRTNKHAPVETTSKKPVSRRRDFLANEPAKPKSRDPRFAPPGIGGSSGKSVVDEIKARKAYSFLDDYQEDEMKQLRMAIKKTKDANEKEELQRALLSMESKKKARARKDKERELLSEHKKKEKELIKQGKTPFYLKKSEQKKQLLVEQFASMKKSQVDKAIERKRKKIAGKEKKALPLARRTAEDR.

4 disordered regions span residues 1-91 (MPAV…ASQL), 104-196 (GALK…SGKS), 243-262 (SMES…ELLS), and 312-332 (KKIA…AEDR). Composition is skewed to acidic residues over residues 27 to 45 (EPDS…EEEG), 53 to 77 (DTEE…DSDA), and 117 to 127 (EDGSDDDEEKE). Composition is skewed to basic and acidic residues over residues 128–142 (EPNW…MKAK) and 165–183 (RRRD…RDPR). Residues 212 to 274 (DYQEDEMKQL…KKKEKELIKQ (63 aa)) adopt a coiled-coil conformation. The span at 315–332 (AGKEKKALPLARRTAEDR) shows a compositional bias: basic and acidic residues.

The protein belongs to the RRP36 family. As to quaternary structure, associates with 90S and pre-40S pre-ribosomal particles.

The protein localises to the nucleus. It is found in the nucleolus. Its function is as follows. Component of the 90S pre-ribosome involved in the maturation of rRNAs. Required for early cleavages of the pre-RNAs in the 40S ribosomal subunit maturation pathway. In Neurospora crassa (strain ATCC 24698 / 74-OR23-1A / CBS 708.71 / DSM 1257 / FGSC 987), this protein is rRNA biogenesis protein rrp-36 (rrp-36).